The chain runs to 593 residues: High affinity cGMP-specific 3',5'-cyclic phosphodiesterase 9A (593 aa).

A disordered region spans residues 87-141; the sequence is SAGVEDKRTTSRGQSAERPLRDRRVVGLEQPRREGAFESGQVEPRPREPQGCYQE. The span at 104-122 shows a compositional bias: basic and acidic residues; that stretch reads RPLRDRRVVGLEQPRREGA. The 322-residue stretch at 236-557 folds into the PDEase domain; that stretch reads PRRDVPTYPK…DRYEELKRID (322 aa). Residue His312 is the Proton donor of the active site. 312-316 contributes to the 3',5'-cyclic GMP binding site; that stretch reads HNFRH. His316, His352, and Asp353 together coordinate Zn(2+). Asp353 is a binding site for 3',5'-cyclic GMP. A Mg(2+)-binding site is contributed by Asp353. Phosphoserine is present on Ser379. Residues Asp462, Tyr484, and 512-513 each bind 3',5'-cyclic GMP; that span reads AQ. Asp462 contributes to the Zn(2+) binding site. Residues 564 to 593 form a disordered region; the sequence is QKKTDSLTSGATEKSRERSRDVKNSEGDCA. Basic and acidic residues predominate over residues 576–593; sequence EKSRERSRDVKNSEGDCA.

Belongs to the cyclic nucleotide phosphodiesterase family. PDE9 subfamily. Homodimer. The cofactor is Zn(2+). It depends on Mg(2+) as a cofactor. Expressed in all tissues examined (testis, brain, small intestine, skeletal muscle, heart, lung, thymus, spleen, placenta, kidney, liver, pancreas, ovary and prostate) except blood. Highest levels in brain, heart, kidney, spleen, prostate and colon. Isoform PDE9A12 is found in prostate. In brain, present in the cortex, cerebellum, and subiculum (at protein level). In heart, primarily localizes to myocytes.

Its subcellular location is the cell projection. It localises to the ruffle membrane. It is found in the cytoplasm. The protein resides in the perinuclear region. The protein localises to the golgi apparatus. Its subcellular location is the endoplasmic reticulum. It localises to the cell membrane. It is found in the sarcolemma. The enzyme catalyses 3',5'-cyclic GMP + H2O = GMP + H(+). The protein operates within purine metabolism; 3',5'-cyclic GMP degradation; GMP from 3',5'-cyclic GMP: step 1/1. Its activity is regulated as follows. Inhibited by zaprinast; inhibitor is however not specific to PDE9A. Specifically inhibited by BAY-73-6691 (1-(2-chlorophenyl)-6-((2R)-3,3,3- trifluoro-2-methylpropyl)-1,5-dihydro-4H-pyrazolo(3,4-d)pyrimidine-4-one). BAY-73-9961 has two enantiomers, (R) and (S), due to the presence of a chiral center, and both forms vary in their pattern of interaction. Specifically inhibited by PF-4181366 (4H-Pyrazolo[3,4-d]pyrimidin-4-one, 1- cyclopentyl-1,5-dihydro-6-[(3S,4S)-4-methyl- 1-(6-quinoxalinylmethyl)-3-pyrrolidinyl]-one). Specifically inhibited by PF-4449613 ((R)-6-(1-(3-phenoxyazetidin-1-yl)ethyl)-1-(tetrahydro-2H-pyran-4-yl)-1H-pyrazolo[3,4-d]pyrimidin- 4(5H)-one). Specifically inhibited by inhibitor 28 (2-((1-(2-Chlorophenyl)-4-hydroxy-1Hpyrazolo[ 3,4-d]pyrimidin-6-yl)amino)-N-(4- methoxyphenyl)propanamide): inhibitor forms a hydrogen bond with Tyr-484 and Gln-513. Specifically inhibited by 1-Cyclopentyl-6-[(1r)-1-(3-phenoxyazetidin- 1-Yl)ethyl]-1,5-dihydro-4h-pyrazolo[3,4-D] pyrimidin-4-one: inhibitor forms a hydrogen bond with Tyr-484 and Gln-513. Its function is as follows. Specifically hydrolyzes the second messenger cGMP, which is a key regulator of many important physiological processes. Highly specific: compared to other members of the cyclic nucleotide phosphodiesterase family, has the highest affinity and selectivity for cGMP. Specifically regulates natriuretic-peptide-dependent cGMP signaling in heart, acting as a regulator of cardiac hypertrophy in myocytes and muscle. Does not regulate nitric oxide-dependent cGMP in heart. Additional experiments are required to confirm whether its ability to hydrolyze natriuretic-peptide-dependent cGMP is specific to heart or is a general feature of the protein. In brain, involved in cognitive function, such as learning and long-term memory. The protein is High affinity cGMP-specific 3',5'-cyclic phosphodiesterase 9A of Homo sapiens (Human).